Here is a 667-residue protein sequence, read N- to C-terminus: Homeobox protein 3 (667 aa).

Disordered regions lie at residues 44 to 108 (FFQP…NSSI), 179 to 232 (NNNN…TVYN), 249 to 268 (NNNNLNLTNNNNNKNSVNNN), and 331 to 418 (STNK…YQKQ). A compositionally biased stretch (pro residues) spans 52–63 (LPPPTNQQPQPQ). Polar residues predominate over residues 75 to 96 (CNSSFENSPQQPTSPLLISSQT). The segment covering 97 to 108 (SYPSDLSSNSSI) has biased composition (low complexity). Positions 334–343 (KRMKISHHSH) are enriched in basic residues. The segment covering 344–379 (SLSNNNENSLSQPYFNNNNNNNNENENVYNIVNEQN) has biased composition (low complexity). A compositionally biased stretch (polar residues) spans 380-390 (PTFNPNQSNTH). Residues 386–454 (QSNTHQQQEE…ENENVICSEF (69 aa)) adopt a coiled-coil conformation. The homeobox DNA-binding region spans 602–664 (EFKSRRILSE…NKRMRDKSNK (63 aa)).

Its subcellular location is the nucleus. In terms of biological role, putative transcription factor. The protein is Homeobox protein 3 (hbx3) of Dictyostelium discoideum (Social amoeba).